The following is a 145-amino-acid chain: 3-dehydroquinate dehydratase (145 aa).

Residue tyrosine 23 is the Proton acceptor of the active site. Asparagine 75, histidine 81, and aspartate 88 together coordinate substrate. The Proton donor role is filled by histidine 101. Substrate contacts are provided by residues 102–103 (IS) and arginine 112.

Belongs to the type-II 3-dehydroquinase family. Homododecamer.

It carries out the reaction 3-dehydroquinate = 3-dehydroshikimate + H2O. The protein operates within metabolic intermediate biosynthesis; chorismate biosynthesis; chorismate from D-erythrose 4-phosphate and phosphoenolpyruvate: step 3/7. Catalyzes a trans-dehydration via an enolate intermediate. This chain is 3-dehydroquinate dehydratase, found in Caldicellulosiruptor saccharolyticus (strain ATCC 43494 / DSM 8903 / Tp8T 6331).